Here is a 320-residue protein sequence, read N- to C-terminus: Lipoyl synthase (320 aa).

Residues Cys67, Cys72, Cys78, Cys93, Cys97, Cys100, and Ser307 each contribute to the [4Fe-4S] cluster site. The region spanning 79–296 is the Radical SAM core domain; that stretch reads FNHGTATFMI…RDKANEMGFE (218 aa).

Belongs to the radical SAM superfamily. Lipoyl synthase family. [4Fe-4S] cluster is required as a cofactor.

The protein localises to the cytoplasm. It catalyses the reaction [[Fe-S] cluster scaffold protein carrying a second [4Fe-4S](2+) cluster] + N(6)-octanoyl-L-lysyl-[protein] + 2 oxidized [2Fe-2S]-[ferredoxin] + 2 S-adenosyl-L-methionine + 4 H(+) = [[Fe-S] cluster scaffold protein] + N(6)-[(R)-dihydrolipoyl]-L-lysyl-[protein] + 4 Fe(3+) + 2 hydrogen sulfide + 2 5'-deoxyadenosine + 2 L-methionine + 2 reduced [2Fe-2S]-[ferredoxin]. Its pathway is protein modification; protein lipoylation via endogenous pathway; protein N(6)-(lipoyl)lysine from octanoyl-[acyl-carrier-protein]: step 2/2. Functionally, catalyzes the radical-mediated insertion of two sulfur atoms into the C-6 and C-8 positions of the octanoyl moiety bound to the lipoyl domains of lipoate-dependent enzymes, thereby converting the octanoylated domains into lipoylated derivatives. The protein is Lipoyl synthase of Haemophilus influenzae (strain PittGG).